The following is a 603-amino-acid chain: Aspartate--tRNA(Asp/Asn) ligase (603 aa).

The segment at 205 to 208 is aspartate; that stretch reads QLFK. Residue arginine 227 coordinates L-aspartate. ATP is bound by residues 227 to 229 and glutamine 236; that span reads RDE. Histidine 463 contacts L-aspartate. Glutamate 497 contributes to the ATP binding site. Arginine 504 lines the L-aspartate pocket. Residue 549-552 participates in ATP binding; that stretch reads GMDR.

It belongs to the class-II aminoacyl-tRNA synthetase family. Type 1 subfamily. Homodimer.

The protein localises to the cytoplasm. It carries out the reaction tRNA(Asx) + L-aspartate + ATP = L-aspartyl-tRNA(Asx) + AMP + diphosphate. In terms of biological role, aspartyl-tRNA synthetase with relaxed tRNA specificity since it is able to aspartylate not only its cognate tRNA(Asp) but also tRNA(Asn). Reaction proceeds in two steps: L-aspartate is first activated by ATP to form Asp-AMP and then transferred to the acceptor end of tRNA(Asp/Asn). This chain is Aspartate--tRNA(Asp/Asn) ligase, found in Anaeromyxobacter sp. (strain K).